The following is a 190-amino-acid chain: Peptidyl-tRNA hydrolase (190 aa).

Tyrosine 18 is a tRNA binding site. Catalysis depends on histidine 23, which acts as the Proton acceptor. Residues phenylalanine 67, asparagine 69, and asparagine 115 each coordinate tRNA.

Belongs to the PTH family. In terms of assembly, monomer.

Its subcellular location is the cytoplasm. It catalyses the reaction an N-acyl-L-alpha-aminoacyl-tRNA + H2O = an N-acyl-L-amino acid + a tRNA + H(+). Functionally, hydrolyzes ribosome-free peptidyl-tRNAs (with 1 or more amino acids incorporated), which drop off the ribosome during protein synthesis, or as a result of ribosome stalling. In terms of biological role, catalyzes the release of premature peptidyl moieties from peptidyl-tRNA molecules trapped in stalled 50S ribosomal subunits, and thus maintains levels of free tRNAs and 50S ribosomes. The sequence is that of Peptidyl-tRNA hydrolase from Leptospira interrogans serogroup Icterohaemorrhagiae serovar Lai (strain 56601).